The chain runs to 1193 residues: Probable DNA-directed RNA polymerase II subunit RPB2 homolog (1193 aa).

Residue aspartate 808 participates in Mg(2+) binding. Residues cysteine 1137, cysteine 1140, cysteine 1155, and cysteine 1158 each contribute to the Zn(2+) site. A C4-type zinc finger spans residues 1137–1158 (CVPCKSYFKVVKTQNGFFCSGC).

It belongs to the RNA polymerase beta chain family.

The catalysed reaction is RNA(n) + a ribonucleoside 5'-triphosphate = RNA(n+1) + diphosphate. In terms of biological role, component of the DNA-dependent RNA polymerase that catalyzes the transcription of DNA into RNA using the four ribonucleoside triphosphates as substrates. Second largest component of RNA polymerase II which synthesizes mRNA precursors and many functional non-coding RNAs. Proposed to contribute to the polymerase catalytic activity and forms the polymerase active center together with the largest subunit. The protein is Probable DNA-directed RNA polymerase II subunit RPB2 homolog of Invertebrate iridescent virus 6 (IIV-6).